The chain runs to 416 residues: Histidine--tRNA ligase (416 aa).

Belongs to the class-II aminoacyl-tRNA synthetase family.

The protein localises to the cytoplasm. The catalysed reaction is tRNA(His) + L-histidine + ATP = L-histidyl-tRNA(His) + AMP + diphosphate + H(+). The protein is Histidine--tRNA ligase of Methanococcus maripaludis (strain DSM 14266 / JCM 13030 / NBRC 101832 / S2 / LL).